The chain runs to 519 residues: Bifunctional dihydrofolate reductase-thymidylate synthase 1 (519 aa).

N-acetylalanine is present on alanine 2. Residues 21 to 198 enclose the DHFR domain; that stretch reads TYQVVVAATK…LRFCFTTFVR (178 aa). Valine 25 serves as a coordination point for substrate. Residues alanine 27 and 33–39 each bind NADP(+); that span reads GIGKDGK. Aspartate 47 provides a ligand contact to substrate. NADP(+) is bound by residues 71 to 73 and 92 to 95; these read RKT and LTRS. Residue isoleucine 134 participates in substrate binding. Residue 135–142 participates in NADP(+) binding; it reads GGGDILRE. Threonine 155 contributes to the substrate binding site. Residues 201 to 234 form a hinge region; the sequence is SSADESSDESNGSQSLQFDGKKFLFLPKMVFDQH. The tract at residues 235-519 is thymidylate synthase; that stretch reads EEFLYLNMVE…HKKIEMKMAV (285 aa). Arginine 256 is a dUMP binding site. The active site involves cysteine 401. DUMP is bound by residues histidine 402, 420 to 424, asparagine 432, and 462 to 464; these read QRSAD and HVY.

It in the N-terminal section; belongs to the dihydrofolate reductase family. The protein in the C-terminal section; belongs to the thymidylate synthase family. Heterodimer or homodimer.

It carries out the reaction (6S)-5,6,7,8-tetrahydrofolate + NADP(+) = 7,8-dihydrofolate + NADPH + H(+). The enzyme catalyses dUMP + (6R)-5,10-methylene-5,6,7,8-tetrahydrofolate = 7,8-dihydrofolate + dTMP. It participates in cofactor biosynthesis; tetrahydrofolate biosynthesis; 5,6,7,8-tetrahydrofolate from 7,8-dihydrofolate: step 1/1. Its function is as follows. Bifunctional enzyme. Involved in de novo dTMP biosynthesis. Key enzyme in folate metabolism. Can play two different roles depending on the source of dihydrofolate: de novo synthesis of tetrahydrofolate or recycling of the dihydrofolate released as one of the end products of the TS catalyzed reaction. Catalyzes an essential reaction for de novo glycine and purine synthesis, DNA precursor synthesis, and for the conversion of dUMP to dTMP. This Arabidopsis thaliana (Mouse-ear cress) protein is Bifunctional dihydrofolate reductase-thymidylate synthase 1 (THY-1).